Consider the following 442-residue polypeptide: tRNA modification GTPase MnmE (442 aa).

(6S)-5-formyl-5,6,7,8-tetrahydrofolate-binding residues include Arg24, Glu82, and Lys122. The 148-residue stretch at 219-366 folds into the TrmE-type G domain; that stretch reads GFKVALVGEP…LRRALKREIE (148 aa). A K(+)-binding site is contributed by Asn229. GTP is bound by residues 229 to 234, 248 to 254, and 273 to 276; these read NAGKST, TDIAGTT, and DTAG. Ser233 is a Mg(2+) binding site. 3 residues coordinate K(+): Thr248, Ile250, and Thr253. Residue Thr254 coordinates Mg(2+). Lys442 contacts (6S)-5-formyl-5,6,7,8-tetrahydrofolate.

It belongs to the TRAFAC class TrmE-Era-EngA-EngB-Septin-like GTPase superfamily. TrmE GTPase family. In terms of assembly, homodimer. Heterotetramer of two MnmE and two MnmG subunits. Requires K(+) as cofactor.

It is found in the cytoplasm. Functionally, exhibits a very high intrinsic GTPase hydrolysis rate. Involved in the addition of a carboxymethylaminomethyl (cmnm) group at the wobble position (U34) of certain tRNAs, forming tRNA-cmnm(5)s(2)U34. The polypeptide is tRNA modification GTPase MnmE (Agrobacterium fabrum (strain C58 / ATCC 33970) (Agrobacterium tumefaciens (strain C58))).